The primary structure comprises 182 residues: GTP cyclohydrolase 1 (182 aa).

3 residues coordinate Zn(2+): Cys-73, His-76, and Cys-144.

This sequence belongs to the GTP cyclohydrolase I family. As to quaternary structure, homomer.

It carries out the reaction GTP + H2O = 7,8-dihydroneopterin 3'-triphosphate + formate + H(+). The protein operates within cofactor biosynthesis; 7,8-dihydroneopterin triphosphate biosynthesis; 7,8-dihydroneopterin triphosphate from GTP: step 1/1. In Hydrogenobaculum sp. (strain Y04AAS1), this protein is GTP cyclohydrolase 1.